Reading from the N-terminus, the 204-residue chain is Small ribosomal subunit protein uS4 (204 aa).

The tract at residues 1-49 (MSKRKSAKYKLDRRMGENIWGRPNSPVNKRSYGPGQHGQRRKGKTSDFG) is disordered. Positions 94 to 154 (QRLDMVVYRA…NKAKEMALVI (61 aa)) constitute an S4 RNA-binding domain.

The protein belongs to the universal ribosomal protein uS4 family. Part of the 30S ribosomal subunit. Contacts protein S5. The interaction surface between S4 and S5 is involved in control of translational fidelity.

Functionally, one of the primary rRNA binding proteins, it binds directly to 16S rRNA where it nucleates assembly of the body of the 30S subunit. Its function is as follows. With S5 and S12 plays an important role in translational accuracy. The polypeptide is Small ribosomal subunit protein uS4 (Erythrobacter litoralis (strain HTCC2594)).